Consider the following 101-residue polypeptide: uncharacterized protein (101 aa).

Helical transmembrane passes span 3–23 (IVYE…LFLF) and 39–59 (AFLS…LIFF).

It is found in the membrane. This is an uncharacterized protein from Saccharomyces cerevisiae (strain ATCC 204508 / S288c) (Baker's yeast).